The following is a 348-amino-acid chain: Phenylalanine--tRNA ligase alpha subunit (348 aa).

E268 provides a ligand contact to Mg(2+).

It belongs to the class-II aminoacyl-tRNA synthetase family. Phe-tRNA synthetase alpha subunit type 1 subfamily. In terms of assembly, tetramer of two alpha and two beta subunits. Mg(2+) is required as a cofactor.

It is found in the cytoplasm. It catalyses the reaction tRNA(Phe) + L-phenylalanine + ATP = L-phenylalanyl-tRNA(Phe) + AMP + diphosphate + H(+). The chain is Phenylalanine--tRNA ligase alpha subunit from Bordetella bronchiseptica (strain ATCC BAA-588 / NCTC 13252 / RB50) (Alcaligenes bronchisepticus).